The following is a 238-amino-acid chain: Ribosomal RNA small subunit methyltransferase G (238 aa).

S-adenosyl-L-methionine-binding positions include G77, F82, 128-129 (AE), and R147.

The protein belongs to the methyltransferase superfamily. RNA methyltransferase RsmG family.

The protein resides in the cytoplasm. In terms of biological role, specifically methylates the N7 position of guanine in position 535 of 16S rRNA. The protein is Ribosomal RNA small subunit methyltransferase G of Lysinibacillus sphaericus (strain C3-41).